A 165-amino-acid chain; its full sequence is 2-C-methyl-D-erythritol 2,4-cyclodiphosphate synthase (165 aa).

Residues Asp-8 and His-10 each contribute to the a divalent metal cation site. 4-CDP-2-C-methyl-D-erythritol 2-phosphate-binding positions include 8 to 10 (DVH) and 34 to 35 (HS). His-42 contributes to the a divalent metal cation binding site. Residues 56-58 (DIG), 61-65 (FPDTD), 132-135 (TTTE), Phe-139, and Arg-142 contribute to the 4-CDP-2-C-methyl-D-erythritol 2-phosphate site.

This sequence belongs to the IspF family. As to quaternary structure, homotrimer. It depends on a divalent metal cation as a cofactor.

It carries out the reaction 4-CDP-2-C-methyl-D-erythritol 2-phosphate = 2-C-methyl-D-erythritol 2,4-cyclic diphosphate + CMP. It functions in the pathway isoprenoid biosynthesis; isopentenyl diphosphate biosynthesis via DXP pathway; isopentenyl diphosphate from 1-deoxy-D-xylulose 5-phosphate: step 4/6. Functionally, involved in the biosynthesis of isopentenyl diphosphate (IPP) and dimethylallyl diphosphate (DMAPP), two major building blocks of isoprenoid compounds. Catalyzes the conversion of 4-diphosphocytidyl-2-C-methyl-D-erythritol 2-phosphate (CDP-ME2P) to 2-C-methyl-D-erythritol 2,4-cyclodiphosphate (ME-CPP) with a corresponding release of cytidine 5-monophosphate (CMP). The polypeptide is 2-C-methyl-D-erythritol 2,4-cyclodiphosphate synthase (Halothermothrix orenii (strain H 168 / OCM 544 / DSM 9562)).